The following is a 304-amino-acid chain: Coenzyme PQQ synthesis protein B (304 aa).

It belongs to the PqqB family.

It participates in cofactor biosynthesis; pyrroloquinoline quinone biosynthesis. May be involved in the transport of PQQ or its precursor to the periplasm. The sequence is that of Coenzyme PQQ synthesis protein B from Pseudomonas aeruginosa (strain ATCC 15692 / DSM 22644 / CIP 104116 / JCM 14847 / LMG 12228 / 1C / PRS 101 / PAO1).